A 204-amino-acid chain; its full sequence is MIGRLQGKLIEKQPPEILLDVQGIGYELLLPMTSFYNLPDTGQECTVFTHLVVREDAHLLFGFSTKTDRTLFRELIKTNGVGPKLALAILSAMSVHEFAYAIEREELSKLVKIPGVGKKTAERLLVELKGKFKGLRQPDFFVESKHITVPDIVSAEKETPNDEAVAALVALGYKPPEAAKMVKKVANGDLTSEQLIREALKAAL.

The interval 1-64 (MIGRLQGKLI…EDAHLLFGFS (64 aa)) is domain I. Residues 65–143 (TKTDRTLFRE…GLRQPDFFVE (79 aa)) form a domain II region. The tract at residues 144–155 (SKHITVPDIVSA) is flexible linker. Residues 156–204 (EKETPNDEAVAALVALGYKPPEAAKMVKKVANGDLTSEQLIREALKAAL) are domain III.

Belongs to the RuvA family. As to quaternary structure, homotetramer. Forms an RuvA(8)-RuvB(12)-Holliday junction (HJ) complex. HJ DNA is sandwiched between 2 RuvA tetramers; dsDNA enters through RuvA and exits via RuvB. An RuvB hexamer assembles on each DNA strand where it exits the tetramer. Each RuvB hexamer is contacted by two RuvA subunits (via domain III) on 2 adjacent RuvB subunits; this complex drives branch migration. In the full resolvosome a probable DNA-RuvA(4)-RuvB(12)-RuvC(2) complex forms which resolves the HJ.

It is found in the cytoplasm. Functionally, the RuvA-RuvB-RuvC complex processes Holliday junction (HJ) DNA during genetic recombination and DNA repair, while the RuvA-RuvB complex plays an important role in the rescue of blocked DNA replication forks via replication fork reversal (RFR). RuvA specifically binds to HJ cruciform DNA, conferring on it an open structure. The RuvB hexamer acts as an ATP-dependent pump, pulling dsDNA into and through the RuvAB complex. HJ branch migration allows RuvC to scan DNA until it finds its consensus sequence, where it cleaves and resolves the cruciform DNA. In Actinobacillus succinogenes (strain ATCC 55618 / DSM 22257 / CCUG 43843 / 130Z), this protein is Holliday junction branch migration complex subunit RuvA.